A 385-amino-acid chain; its full sequence is MAALSGVRWLTRALVSAGNPGAWRGLSTSAAAHAASRSQAEDVRVEGSFPVTMLPGDGVGPELMHAVKEVFKAAAVPVEFQEHHLSEVQNMASEEKLEQVLSSMKENKVAIIGKIHTPMEYKGELASYDMRLRRKLDLFANVVHVKSLPGYMTRHNNLDLVIIREQTEGEYSSLEHESARGVIECLKIVTRAKSQRIAKFAFDYATKKGRGKVTAVHKANIMKLGDGLFLQCCEEVAELYPKIKFETMIIDNCCMQLVQNPYQFDVLVMPNLYGNIIDNLAAGLVGGAGVVPGESYSAEYAVFETGARHPFAQAVGRNIANPTAMLLSASNMLRHLNLEYHSSMIADAVKKVIKVGKVRTRDMGGYSTTTDFIKSVIGHLQTKGS.

Residues 1 to 34 (MAALSGVRWLTRALVSAGNPGAWRGLSTSAAAHA) constitute a mitochondrion transit peptide. At lysine 199 the chain carries N6-acetyllysine.

This sequence belongs to the isocitrate and isopropylmalate dehydrogenases family. In terms of assembly, heterooligomer of subunits alpha (IDH3A), beta (IDH3B), and gamma (IDH3G) in the apparent ratio of 2:1:1. The heterodimer containing one IDH3A and one IDH3B subunit and the heterodimer containing one IDH3A and one IDH3G subunit assemble into a heterotetramer (which contains two subunits of IDH3A, one of IDH3B and one of IDH3G) and further into the heterooctamer.

It is found in the mitochondrion. The heterotetramer and the heterodimer composed of IDH3A and IDH3G subunits can be allosterically activated by citrate (CIT) or/and ADP, and the two activators can act independently or synergistically. The heterodimer composed of IDH3A and IDH3B subunits cannot be allosterically regulated and the allosteric regulation of the heterotetramer is through the IDH3G subunit and not the IDH3B subunit. The IDH3G subunit contains the allosteric site which consists of a CIT-binding site and an ADP-binding site, and the binding of CIT and ADP causes conformational changes at the allosteric site which are transmitted to the active site in the catalytic subunit (IDH3A) through a cascade of conformational changes at the heterodimer interface, leading to stabilization of the isocitrate-binding at the active site and thus activation of the enzyme. ATP can activate the heterotetramer and the heterodimer composed of IDH3A and IDH3G subunits at low concentrations but inhibits their activities at high concentrations, whereas ATP exhibits only inhibitory effect on the heterodimer composed of IDH3A and IDH3B subunits. In terms of biological role, plays a structural role to facilitate the assembly and ensure the full activity of the enzyme catalyzing the decarboxylation of isocitrate (ICT) into alpha-ketoglutarate. The heterodimer composed of the alpha (IDH3A) and beta (IDH3B) subunits and the heterodimer composed of the alpha (IDH3A) and gamma (IDH3G) subunits, have considerable basal activity but the full activity of the heterotetramer (containing two subunits of IDH3A, one of IDH3B and one of IDH3G) requires the assembly and cooperative function of both heterodimers. This chain is Isocitrate dehydrogenase [NAD] subunit beta, mitochondrial (IDH3B), found in Homo sapiens (Human).